An 85-amino-acid chain; its full sequence is uncharacterized protein (85 aa).

A signal peptide spans 1–35; the sequence is MIEDPSKKISLWQKWINVDPKKRILFSLGLFALSA.

The protein localises to the secreted. This is an uncharacterized protein from Dictyostelium discoideum (Social amoeba).